Reading from the N-terminus, the 1341-residue chain is Restriction of telomere capping protein 1 (1341 aa).

Residues 1–39 (MSLSPHVENASIPKGSTPIPKNRNVSSIGKGEFLGSSSS) form a disordered region. 6 WD repeats span residues 207-248 (NKFS…SIDN), 256-296 (EHTR…SKSS), 305-342 (TASDSIRDVKWMPGYNFASKNDQGSSTYGNLKSGYKFA), 367-406 (AHTGPGLCLNWHPNQEYIATGGRDGKCCLWFVGDNANAAE), 439-486 (NTGY…IPKH), and 489-527 (LSETPSLGLVWWDENLIFNIDKGTRINGWDINKEPTVLE). Disordered regions lie at residues 559–593 (PELQPTSSTTCKKHPGTIKNPKNGNPENQGIIGGI), 600–619 (TGLTSFTPERPPTLKAGPTF), 630–651 (ASSFNSSSASLTSLTPQTENRE), 736–765 (KNATETHGDNTTTTNNNDDGDDDDDDDDDD), and 789–830 (NEKV…DRAR). The span at 630-644 (ASSFNSSSASLTSLT) shows a compositional bias: low complexity. Residues 753–765 (DDGDDDDDDDDDD) show a composition bias toward acidic residues. Over residues 814–823 (SSISSISASR) the composition is skewed to low complexity. Residues 843-883 (KIQTLVDLISIATHNASVYLSIDDLTNFKIWILIRDSLLWD) form a WD 7 repeat. Disordered regions lie at residues 941-962 (AFRANSDEPSDAEKKPVSKLKE) and 1013-1043 (DEHEHQEEEQPHDSPTKSAQFHASPIAKSIP). Composition is skewed to basic and acidic residues over residues 951–962 (DAEKKPVSKLKE) and 1015–1027 (HEHQEEEQPHDSP). Phosphoserine is present on residues serine 1036, serine 1080, serine 1087, serine 1089, serine 1123, and serine 1133. WD repeat units lie at residues 1129-1169 (SRPD…KQLY) and 1216-1255 (LFGIAADVLKYCPFEDIMGSEGDQSSIRLFCERCGELITN). Residues 1293 to 1335 (CVLCERPLKKLTMVILPCGHEGHFQCIQEWFLDENEQECPGGC) form an RING-type; degenerate zinc finger.

The protein belongs to the WD repeat RTC1 family. As to quaternary structure, component of the SEA complex composed of at least IML1/SEA1, RTC1/SEA2, MTC5/SEA3, NPR2, NPR3, SEA4, SEC13 and SEH1. Interacts with ribosomes.

The protein resides in the vacuole membrane. Functionally, component of the SEA complex which coats the vacuolar membrane and is involved in intracellular trafficking, autophagy, response to nitrogen starvation, and amino acid biogenesis. May be involved in a process influencing telomere capping. This chain is Restriction of telomere capping protein 1 (RTC1), found in Saccharomyces cerevisiae (strain ATCC 204508 / S288c) (Baker's yeast).